Here is a 628-residue protein sequence, read N- to C-terminus: MDSGSSSSDSAPDCWDQVDMEAPGSAPSGDGVSSAVAEAQREPLSSAFSRQLNVNAKPFVPNVHAAEFVPSFLRGPSQPPTLPAGSGSNDETCTGAGYPQGKRMGRGAPVEPSREEPLVSLEGSNSAVTMELSEPVVENGEVEMALEESWEHSKEVSEAEPGGGSSGDSGPPEESGQEMMEEKEEIRKSKSVIVPSGAPKKEHVNVVFIGHVDAGKSTIGGQIMFLTGMVDKRTLEKYEREAKEKNRETWYLSWALDTNQEERDKGKTVEVGRAYFETERKHFTILDAPGHKSFVPNMIGGASQADLAVLVISARKGEFETGFEKGGQTREHAMLAKTAGVKHLIVLINKMDDPTVNWSIERYEECKEKLVPFLKKVGFSPKKDIHFMPCSGLTGANVKEQSDFCPWYTGLPFIPYLDNLPNFNRSIDGPIRLPIVDKYKDMGTVVLGKLESGSIFKGQQLVMMPNKHNVEVLGILSDDTETDFVAPGENLKIRLKGIEEEEILPGFILCDPSNLCHSGRTFDVQIVIIEHKSIICPGYNAVLHIHTCIEEVEITALISLVDKKSGEKSKTRPRFVKQDQVCIARLRTAGTICLETFKDFPQMGRFTLRDEGKTIAIGKVLKLVPEKD.

A compositionally biased stretch (low complexity) spans 1 to 10 (MDSGSSSSDS). 3 disordered regions span residues 1–44 (MDSG…REPL), 71–124 (SFLR…LEGS), and 146–191 (LEES…KSKS). Positions 201–425 (KEHVNVVFIG…YLDNLPNFNR (225 aa)) constitute a tr-type G domain. Residues 210-217 (GHVDAGKS) are G1. 213–218 (DAGKST) contributes to the GTP binding site. Residues 266–270 (GKTVE) are G2. A G3 region spans residues 287–290 (DAPG). GTP is bound by residues 349–352 (NKMD) and 391–393 (SGL). The segment at 349 to 352 (NKMD) is G4. A G5 region spans residues 391-393 (SGL).

This sequence belongs to the TRAFAC class translation factor GTPase superfamily. Classic translation factor GTPase family. ERF3 subfamily. Component of the eRF1-eRF3-GTP ternary complex, composed of ETF1/ERF1 and ERF3 (GSPT1/ERF3A or GSPT2/ERF3B) and GTP. Component of the transient SURF (SMG1-UPF1-eRF1-eRF3) complex. Interacts with UPF1 and PABPC1.

The protein localises to the cytoplasm. The enzyme catalyses GTP + H2O = GDP + phosphate + H(+). Its function is as follows. GTPase component of the eRF1-eRF3-GTP ternary complex, a ternary complex that mediates translation termination in response to the termination codons UAA, UAG and UGA. GSPT2/ERF3B mediates ETF1/ERF1 delivery to stop codons: The eRF1-eRF3-GTP complex binds to a stop codon in the ribosomal A-site. GTP hydrolysis by GSPT2/ERF3B induces a conformational change that leads to its dissociation, permitting ETF1/ERF1 to accommodate fully in the A-site. Component of the transient SURF complex which recruits UPF1 to stalled ribosomes in the context of nonsense-mediated decay (NMD) of mRNAs containing premature stop codons. This Pongo abelii (Sumatran orangutan) protein is Eukaryotic peptide chain release factor GTP-binding subunit ERF3B (GSPT2).